Reading from the N-terminus, the 118-residue chain is Large ribosomal subunit protein bL20 (118 aa).

This sequence belongs to the bacterial ribosomal protein bL20 family.

In terms of biological role, binds directly to 23S ribosomal RNA and is necessary for the in vitro assembly process of the 50S ribosomal subunit. It is not involved in the protein synthesizing functions of that subunit. This is Large ribosomal subunit protein bL20 from Aliarcobacter butzleri (strain RM4018) (Arcobacter butzleri).